The chain runs to 325 residues: MKNIILEIEEKIYSDEDITFNEAITLFQSSYDKNLNNLLDAANRIRNKFNGNIVDLCSIMNAKSGRCSEDCKFCAQSEHYNTNIKKYNMINMSDALNLAKENKEHGINRFSLVTSGKALTSNDFEKALEIYKEINKRVNINLCASLGILSYNQLLQLKNVGVTMYHHNLETSREYYNKICTTHSYDERIETINNAKKAGLMVCSGGIIGMGETITDRIKLAFELKSLQIQSIPINILNPVKGTPLEYTKRLEQNDILKTIAIFRFINPKASIRLAGGRNLIDNFGKGCFRAGANATISGNYLTTSGNKINDDIEMIKSLGLSLDI.

A Radical SAM core domain is found at 49-278; it reads FNGNIVDLCS…KASIRLAGGR (230 aa). [4Fe-4S] cluster is bound by residues C67, C71, and C74. Residues S111, C143, C203, and R273 each coordinate [2Fe-2S] cluster.

Belongs to the radical SAM superfamily. Biotin synthase family. Homodimer. It depends on [4Fe-4S] cluster as a cofactor. The cofactor is [2Fe-2S] cluster.

It catalyses the reaction (4R,5S)-dethiobiotin + (sulfur carrier)-SH + 2 reduced [2Fe-2S]-[ferredoxin] + 2 S-adenosyl-L-methionine = (sulfur carrier)-H + biotin + 2 5'-deoxyadenosine + 2 L-methionine + 2 oxidized [2Fe-2S]-[ferredoxin]. Its pathway is cofactor biosynthesis; biotin biosynthesis; biotin from 7,8-diaminononanoate: step 2/2. In terms of biological role, catalyzes the conversion of dethiobiotin (DTB) to biotin by the insertion of a sulfur atom into dethiobiotin via a radical-based mechanism. This is Biotin synthase from Clostridium tetani (strain Massachusetts / E88).